The following is a 277-amino-acid chain: Putative phosphoenolpyruvate synthase regulatory protein (277 aa).

An ADP-binding site is contributed by 157–164 (GVSRSGKT).

Belongs to the pyruvate, phosphate/water dikinase regulatory protein family. PSRP subfamily.

The catalysed reaction is [pyruvate, water dikinase] + ADP = [pyruvate, water dikinase]-phosphate + AMP + H(+). The enzyme catalyses [pyruvate, water dikinase]-phosphate + phosphate + H(+) = [pyruvate, water dikinase] + diphosphate. Bifunctional serine/threonine kinase and phosphorylase involved in the regulation of the phosphoenolpyruvate synthase (PEPS) by catalyzing its phosphorylation/dephosphorylation. This is Putative phosphoenolpyruvate synthase regulatory protein from Aromatoleum aromaticum (strain DSM 19018 / LMG 30748 / EbN1) (Azoarcus sp. (strain EbN1)).